The chain runs to 183 residues: ATP-dependent protease subunit HslV (183 aa).

T7 is an active-site residue. Na(+)-binding residues include G162, C165, and T168.

Belongs to the peptidase T1B family. HslV subfamily. A double ring-shaped homohexamer of HslV is capped on each side by a ring-shaped HslU homohexamer. The assembly of the HslU/HslV complex is dependent on binding of ATP.

It is found in the cytoplasm. The enzyme catalyses ATP-dependent cleavage of peptide bonds with broad specificity.. With respect to regulation, allosterically activated by HslU binding. In terms of biological role, protease subunit of a proteasome-like degradation complex believed to be a general protein degrading machinery. The protein is ATP-dependent protease subunit HslV of Alkalilimnicola ehrlichii (strain ATCC BAA-1101 / DSM 17681 / MLHE-1).